Reading from the N-terminus, the 260-residue chain is DNA repair protein RecO (260 aa).

Belongs to the RecO family.

Functionally, involved in DNA repair and RecF pathway recombination. The protein is DNA repair protein RecO of Ligilactobacillus salivarius (strain UCC118) (Lactobacillus salivarius).